Here is a 165-residue protein sequence, read N- to C-terminus: uncharacterized protein (165 aa).

The disordered stretch occupies residues 49–165; the sequence is QLKPQGPKRP…VAQQREIAQK (117 aa). Polar residues predominate over residues 94 to 106; that stretch reads MNNNNNYKISYTS. Low complexity predominate over residues 120 to 135; that stretch reads TLQRTTPQAQPTPQQP. The segment covering 139-157 has biased composition (polar residues); that stretch reads SRSSGGITGAVNNRPQMVA.

This is an uncharacterized protein from Caenorhabditis elegans.